Consider the following 436-residue polypeptide: Chorion-specific transcription factor GCMa (436 aa).

A DNA-binding region (GCM) is located at residues 14–169 (LSWDINDVKL…KLEAEARRAM (156 aa)). Zn(2+) is bound by residues cysteine 76, cysteine 82, cysteine 86, cysteine 113, cysteine 116, cysteine 125, histidine 152, and histidine 154. The tract at residues 171–202 (KVNTAPSSVSLSLKGSTETRSLPGETQSQGSL) is disordered. The span at 174 to 202 (TAPSSVSLSLKGSTETRSLPGETQSQGSL) shows a compositional bias: polar residues.

In terms of processing, polyubiquitinated in the presence of UBE2D2 and FBXW2 (in vitro). In terms of tissue distribution, highly expressed in the placenta. Expressed in trophoblast cells of the villi.

Its subcellular location is the nucleus. In terms of biological role, transcription factor involved in the control of expression of placental growth factor (PGF) and other placenta-specific genes. Binds to the trophoblast-specific element 2 (TSE2) of the aromatase gene enhancer. Binds to the SYDE1 promoter. Has a central role in mediating the differentiation of trophoblast cells along both the villous and extravillous pathways in placental development. The sequence is that of Chorion-specific transcription factor GCMa (GCM1) from Homo sapiens (Human).